The sequence spans 232 residues: Phosphatidylserine decarboxylase proenzyme (232 aa).

The active-site Schiff-base intermediate with substrate; via pyruvic acid is the serine 190. Serine 190 is modified (pyruvic acid (Ser); by autocatalysis).

This sequence belongs to the phosphatidylserine decarboxylase family. PSD-A subfamily. Heterodimer of a large membrane-associated beta subunit and a small pyruvoyl-containing alpha subunit. Requires pyruvate as cofactor. Post-translationally, is synthesized initially as an inactive proenzyme. Formation of the active enzyme involves a self-maturation process in which the active site pyruvoyl group is generated from an internal serine residue via an autocatalytic post-translational modification. Two non-identical subunits are generated from the proenzyme in this reaction, and the pyruvate is formed at the N-terminus of the alpha chain, which is derived from the carboxyl end of the proenzyme. The post-translation cleavage follows an unusual pathway, termed non-hydrolytic serinolysis, in which the side chain hydroxyl group of the serine supplies its oxygen atom to form the C-terminus of the beta chain, while the remainder of the serine residue undergoes an oxidative deamination to produce ammonia and the pyruvoyl prosthetic group on the alpha chain.

Its subcellular location is the cell membrane. The catalysed reaction is a 1,2-diacyl-sn-glycero-3-phospho-L-serine + H(+) = a 1,2-diacyl-sn-glycero-3-phosphoethanolamine + CO2. It functions in the pathway phospholipid metabolism; phosphatidylethanolamine biosynthesis; phosphatidylethanolamine from CDP-diacylglycerol: step 2/2. Functionally, catalyzes the formation of phosphatidylethanolamine (PtdEtn) from phosphatidylserine (PtdSer). The polypeptide is Phosphatidylserine decarboxylase proenzyme (Cereibacter sphaeroides (strain ATCC 17025 / ATH 2.4.3) (Rhodobacter sphaeroides)).